Consider the following 316-residue polypeptide: ATP synthase gamma chain (316 aa).

This sequence belongs to the ATPase gamma chain family. As to quaternary structure, F-type ATPases have 2 components, CF(1) - the catalytic core - and CF(0) - the membrane proton channel. CF(1) has five subunits: alpha(3), beta(3), gamma(1), delta(1), epsilon(1). CF(0) has three main subunits: a, b and c.

The protein resides in the cellular thylakoid membrane. Functionally, produces ATP from ADP in the presence of a proton gradient across the membrane. The gamma chain is believed to be important in regulating ATPase activity and the flow of protons through the CF(0) complex. The polypeptide is ATP synthase gamma chain (Synechococcus sp. (strain CC9605)).